The primary structure comprises 492 residues: uncharacterized protein (492 aa).

It belongs to the FGGY kinase family.

This is an uncharacterized protein from Escherichia coli (strain K12).